The primary structure comprises 561 residues: MADTDSRPSNFIRQIIDKDLASGKHATVHTRFPPEPNGYLHIGHAKSIVLNFGIAEDYNGTCNLRFDDTNPLKEKVDYVNSIKKDVEWLGYHWEGEPRYSSNYFDQLHGFAVELIEKGLAYVDFSSQDKMREMRGTLKEPGVNSPYRDTSVEENLKHFADMTAGKHEEGTAALRAKIDMSSPFMCMRDPVIYRVRFVHHHQTGDKWCVYPMYDFTHCISDALEGITHSLCTLEFQDNRRLYDWVLDNISIDCHPQQIEFSRLNLQYTVMSKRIINTLVDENKVSGWDDPRIASIAGLRRRGYTPDSVREFCRRIGVTKMDNQVEMSMLEACIRDDLNVNAPRAMAVMDPVKIVIENYPEGEQELLDAPNHPNDPEMGSRQVTFSREIWIEREDFRESANKKFKRLVLDKEVRLRNAYVIRADRIETDDNGEIQTIYCHYDADTLGKDPADGRKVKGVIHWVSAETAKAAEFRVYDRLFQVPNPAAEEDLFSTLNPESLVIKKGFVEANLASAKLGENFQFERLGYYCLDQDAETEGRLIFNQTVGLRDSWAKIEQEQTTGS.

The 'HIGH' region signature appears at 34–44; that stretch reads PEPNGYLHIGH. Residues 35 to 37 and 41 to 47 contribute to the ATP site; these read EPN and HIGHAKS. The L-glutamine site is built by Asp-67 and Tyr-212. ATP-binding positions include Thr-231, 261 to 262, and 269 to 271; these read RL and MSK. Residues 268-272 carry the 'KMSKS' region motif; that stretch reads VMSKR.

The protein belongs to the class-I aminoacyl-tRNA synthetase family. Monomer.

The protein localises to the cytoplasm. The catalysed reaction is tRNA(Gln) + L-glutamine + ATP = L-glutaminyl-tRNA(Gln) + AMP + diphosphate. The polypeptide is Glutamine--tRNA ligase (Idiomarina loihiensis (strain ATCC BAA-735 / DSM 15497 / L2-TR)).